We begin with the raw amino-acid sequence, 108 residues long: UPF0145 protein Tmel_1129 (108 aa).

The protein belongs to the UPF0145 family.

This chain is UPF0145 protein Tmel_1129, found in Thermosipho melanesiensis (strain DSM 12029 / CIP 104789 / BI429).